Reading from the N-terminus, the 418-residue chain is MEFSCTGTNNQLAVHRFTETRFTSFKKELLVNLGISDLNDIKNICEDSKIFFPEKRTELLSIKDRKSKQIVFENSLNDDLLKKLHALIYDELSTVVDSVTVENTVTLIMYEKGDYFARHRDFSTVFSKNIICVHLLLYLEQPETGGETVIYIDNNTSVKLKTDHLFDKTIEHESITVESGRKCVALFDVLLEKKLSASTNVIGSIEYLGKKINLYDRENDLQLCYCDMVIERMTEDKEYSLGMISDRSGRCIKSHHNGSIVRYRKEEYGSFDALCIYNMNEVDEIWTGDKKHIIWSTIDKKTGTSFIPIDPVLYEKLKAISSKEHKEYKDLRGFCNSRTEYICCSVSKYYFDLPTKTDLIHEVINSIDYDTKSVGTPDWYTLPIEVKQTILGNMSYEELFNIVRGNIALEEDNEYGCD.

It belongs to the poxviruses C4/C10 family.

This is an uncharacterized protein from Fowlpox virus (strain NVSL) (FPV).